A 331-amino-acid chain; its full sequence is Olfactory receptor 10S1 (331 aa).

Residues 1–38 lie on the Extracellular side of the membrane; sequence MTSRSVCEKMTMTTENPNQTVVSHFFLEGLRYTAKHSS. N-linked (GlcNAc...) asparagine glycosylation is present at N18. Residues 39 to 59 form a helical membrane-spanning segment; sequence LFFLLFLLIYSITVAGNLLIL. The Cytoplasmic segment spans residues 60 to 67; that stretch reads LTVGSDSH. Residues 68–88 form a helical membrane-spanning segment; it reads LSLPMYHFLGHLSFLDACLST. Residues 89–113 are Extracellular-facing; sequence VTVPKVMAGLLTLDGKVISFEGCAV. C111 and C203 are joined by a disulfide. Residues 114–134 traverse the membrane as a helical segment; that stretch reads QLYCFHFLASTECFLYTVMAY. Topologically, residues 135-153 are cytoplasmic; that stretch reads DRYLAICQPLHYPVAMNRR. The chain crosses the membrane as a helical span at residues 154 to 174; sequence MCAEMAGITWAIGATHAAIHT. The Extracellular portion of the chain corresponds to 175–211; sequence SLTFRLLYCGPCHIAYFFCDIPPVLKLACTDTTINEL. A helical membrane pass occupies residues 212–231; sequence VMLASIGIVAAGCLILIVIS. At 232-251 the chain is on the cytoplasmic side; the sequence is YIFIVAAVLRIRTAQGRQRA. Residues 252 to 272 form a helical membrane-spanning segment; the sequence is FSPCTAQLTGVLLYYVPPVCI. The Extracellular portion of the chain corresponds to 273 to 283; it reads YLQPRSSEAGA. The helical transmembrane segment at 284–304 threads the bilayer; the sequence is GAPAVFYTIVTPMLNPFIYTL. Over 305 to 331 the chain is Cytoplasmic; the sequence is RNKEVKHALQRLLCSSFRESTAGSPPP.

The protein belongs to the G-protein coupled receptor 1 family.

It localises to the cell membrane. Its function is as follows. Odorant receptor. The polypeptide is Olfactory receptor 10S1 (OR10S1) (Homo sapiens (Human)).